Here is a 232-residue protein sequence, read N- to C-terminus: Large ribosomal subunit protein uL1 (232 aa).

Belongs to the universal ribosomal protein uL1 family. Part of the 50S ribosomal subunit.

Binds directly to 23S rRNA. The L1 stalk is quite mobile in the ribosome, and is involved in E site tRNA release. Its function is as follows. Protein L1 is also a translational repressor protein, it controls the translation of the L11 operon by binding to its mRNA. The sequence is that of Large ribosomal subunit protein uL1 from Syntrophus aciditrophicus (strain SB).